Reading from the N-terminus, the 271-residue chain is Formamidopyrimidine-DNA glycosylase (271 aa).

Pro2 (schiff-base intermediate with DNA) is an active-site residue. Glu3 acts as the Proton donor in catalysis. Catalysis depends on Lys57, which acts as the Proton donor; for beta-elimination activity. DNA contacts are provided by His90, Arg109, and Lys150. The FPG-type zinc-finger motif lies at 235–269; that stretch reads LVYGNKDKPCPKCGGKIESLIIGQRNSFFCPKCQK. The Proton donor; for delta-elimination activity role is filled by Arg259.

Belongs to the FPG family. Monomer. It depends on Zn(2+) as a cofactor.

The enzyme catalyses Hydrolysis of DNA containing ring-opened 7-methylguanine residues, releasing 2,6-diamino-4-hydroxy-5-(N-methyl)formamidopyrimidine.. It carries out the reaction 2'-deoxyribonucleotide-(2'-deoxyribose 5'-phosphate)-2'-deoxyribonucleotide-DNA = a 3'-end 2'-deoxyribonucleotide-(2,3-dehydro-2,3-deoxyribose 5'-phosphate)-DNA + a 5'-end 5'-phospho-2'-deoxyribonucleoside-DNA + H(+). In terms of biological role, involved in base excision repair of DNA damaged by oxidation or by mutagenic agents. Acts as a DNA glycosylase that recognizes and removes damaged bases. Has a preference for oxidized purines, such as 7,8-dihydro-8-oxoguanine (8-oxoG). Has AP (apurinic/apyrimidinic) lyase activity and introduces nicks in the DNA strand. Cleaves the DNA backbone by beta-delta elimination to generate a single-strand break at the site of the removed base with both 3'- and 5'-phosphates. In Haemophilus influenzae (strain 86-028NP), this protein is Formamidopyrimidine-DNA glycosylase.